The following is a 446-amino-acid chain: Putative F-box protein At1g32660 (446 aa).

Composition is skewed to basic and acidic residues over residues Met1–Ser12 and Asn43–Lys57. Positions Met1–Lys57 are disordered. One can recognise an F-box domain in the interval Lys57–Ser107.

The sequence is that of Putative F-box protein At1g32660 from Arabidopsis thaliana (Mouse-ear cress).